We begin with the raw amino-acid sequence, 539 residues long: Gamma-2-syntrophin (539 aa).

In terms of domain architecture, PDZ spans 73 to 156 (TVTLRRQPVG…EVTITVEYLR (84 aa)). Composition is skewed to low complexity over residues 168-183 (SPGPSSDHSSGASSPL) and 194-205 (SSTTAPSSPSSP). The interval 168-209 (SPGPSSDHSSGASSPLFDSGLHLNGNSSTTAPSSPSSPIAKD) is disordered. Residues 296-421 (QVVHMGWVNE…WEKSFQRATF (126 aa)) enclose the PH domain.

Belongs to the syntrophin family. As to quaternary structure, interacts with the dystrophin protein DMD and related proteins DTNA and DTNB. Widely expressed. Strong expression in brain and testis. In CNS, it is expressed in the perikaryon and proximal portion of the neuronal processes. Strong expression in the hippocampus, neuron-rich dendate granule cells, and pyramidal cell layers. Highly expressed in neurons of the cerebral cortex. Also expressed in the cerebellar cortex, deep cerebellar nuclei, thalamus, and basal ganglia.

Its subcellular location is the cell membrane. It is found in the sarcolemma. It localises to the cytoplasm. The protein resides in the cytoskeleton. Functionally, adapter protein that binds to and probably organizes the subcellular localization of a variety of proteins. May link various receptors to the actin cytoskeleton and the dystrophin glycoprotein complex. The chain is Gamma-2-syntrophin (SNTG2) from Homo sapiens (Human).